The sequence spans 423 residues: Histidine--tRNA ligase (423 aa).

Belongs to the class-II aminoacyl-tRNA synthetase family. Homodimer.

It localises to the cytoplasm. The catalysed reaction is tRNA(His) + L-histidine + ATP = L-histidyl-tRNA(His) + AMP + diphosphate + H(+). The chain is Histidine--tRNA ligase from Rhodococcus opacus (strain B4).